The chain runs to 220 residues: Charged multivesicular body protein 4b (220 aa).

Disordered stretches follow at residues 1 to 22 and 180 to 220; these read MSLFGKMFGSGGKGGKSASPQE and EIGD…WAAN. Coiled coils occupy residues 21–88 and 123–181; these read QEAI…STIE and IDKV…LLEI.

Belongs to the SNF7 family. As to quaternary structure, probable core component of the endosomal sorting required for transport complex III (ESCRT-III). ESCRT-III components are thought to multimerize to form a flat lattice on the perimeter membrane of the endosome.

It localises to the cytoplasm. It is found in the cytosol. The protein localises to the late endosome membrane. The protein resides in the midbody. Functionally, probable core component of the endosomal sorting required for transport complex III (ESCRT-III) which is involved in multivesicular bodies (MVBs) formation and sorting of endosomal cargo proteins into MVBs. MVBs contain intraluminal vesicles (ILVs) that are generated by invagination and scission from the limiting membrane of the endosome and mostly are delivered to lysosomes enabling degradation of membrane proteins, such as stimulated growth factor receptors, lysosomal enzymes and lipids. In Danio rerio (Zebrafish), this protein is Charged multivesicular body protein 4b (chmp4b).